The sequence spans 172 residues: MAKMQAKVQQDERDDGLREKMISVNRVTKVVKGGRILGFAALTVVGDGDGRIGMGKGKAKEVPVAVQKAMDEARRKMVKVSLKNGTLQHEVVGKHGAAKVLMMPAKEGTGVIAGGPMRAIFEVMGVTNVVTKSHGSTNPYNMVRATLDGLQKMSTPGEIAAKRGKSVEDILG.

The S5 DRBM domain occupies 17-80; it reads LREKMISVNR…DEARRKMVKV (64 aa).

The protein belongs to the universal ribosomal protein uS5 family. As to quaternary structure, part of the 30S ribosomal subunit. Contacts proteins S4 and S8.

Functionally, with S4 and S12 plays an important role in translational accuracy. Its function is as follows. Located at the back of the 30S subunit body where it stabilizes the conformation of the head with respect to the body. This is Small ribosomal subunit protein uS5 from Cupriavidus taiwanensis (strain DSM 17343 / BCRC 17206 / CCUG 44338 / CIP 107171 / LMG 19424 / R1) (Ralstonia taiwanensis (strain LMG 19424)).